Consider the following 861-residue polypeptide: Interleukin-12 receptor subunit beta-2 (861 aa).

Positions 1–23 are cleaved as a signal peptide; that stretch reads MARTVCGCSWALIFIIMSLLVKA. The Extracellular segment spans residues 24–622; sequence KIDVCKRGDV…REFCLQGKAN (599 aa). 4 N-linked (GlcNAc...) asparagine glycosylation sites follow: N48, N129, N166, and N271. Fibronectin type-III domains follow at residues 126-224, 226-317, 318-415, 423-520, and 521-620; these read QPQN…VVRP, PPWD…TQTP, EKEP…NIAD, APQQ…KHKA, and PLSG…LQGK. A WSXWS motif motif is present at residues 305 to 309; it reads WSDWS. 3 N-linked (GlcNAc...) asparagine glycosylation sites follow: N347, N376, and N480. The helical transmembrane segment at 623–643 threads the bilayer; that stretch reads WSTFVAPSICIAVITVGVFSM. Residues 644–861 lie on the Cytoplasmic side of the membrane; that stretch reads RCFRQKVFVL…LKMGCGSLML (218 aa). A Box 1 motif motif is present at residues 662–670; that stretch reads CSREIPDPA. A disordered region spans residues 718-761; the sequence is FRRPHHPNWPGKGQRLQGRHASEEDTGSSASSPPPPRALTAETG. Y800 carries the post-translational modification Phosphotyrosine.

This sequence belongs to the type I cytokine receptor family. Type 2 subfamily. Heterodimer/heterooligomer; disulfide-linked. The functional high affinity IL12 receptor is composed of I12RB1 and IL12RB2. Il12RB2 binds JAK2 (via its N-terminal) through a membrane-proximal region of the cytoplasmic domain. On IL12 stimulation, phosphorylated on C-terminal tyrosine residues.

It is found in the membrane. Receptor for interleukin-12. This subunit is the signaling component coupling to the JAK2/STAT4 pathway. The sequence is that of Interleukin-12 receptor subunit beta-2 (IL12RB2) from Sus scrofa (Pig).